The sequence spans 231 residues: Adenosylcobinamide-GDP ribazoletransferase (231 aa).

6 helical membrane passes run 24–44 (LWAFPLVALVSSALPTLILYL), 46–66 (LPLSNLLAVLALYWTIGLLHL), 96–116 (IAGLFAVVIVLLLQVYSLQLL), 159–176 (LALGTLLYVLLGLSVVLF), 181–198 (LAGILGLLFGVHIIRISL), and 209–229 (LGATAEITRAGTLVVMALVWW).

This sequence belongs to the CobS family. Requires Mg(2+) as cofactor.

It is found in the cell membrane. The catalysed reaction is alpha-ribazole + adenosylcob(III)inamide-GDP = adenosylcob(III)alamin + GMP + H(+). It catalyses the reaction alpha-ribazole 5'-phosphate + adenosylcob(III)inamide-GDP = adenosylcob(III)alamin 5'-phosphate + GMP + H(+). It participates in cofactor biosynthesis; adenosylcobalamin biosynthesis; adenosylcobalamin from cob(II)yrinate a,c-diamide: step 7/7. Its function is as follows. Joins adenosylcobinamide-GDP and alpha-ribazole to generate adenosylcobalamin (Ado-cobalamin). Also synthesizes adenosylcobalamin 5'-phosphate from adenosylcobinamide-GDP and alpha-ribazole 5'-phosphate. This Thermococcus kodakarensis (strain ATCC BAA-918 / JCM 12380 / KOD1) (Pyrococcus kodakaraensis (strain KOD1)) protein is Adenosylcobinamide-GDP ribazoletransferase.